The chain runs to 510 residues: Hyaluronidase PH-20 (510 aa).

An N-terminal signal peptide occupies residues 1–35 (MGVLKFKHIFFRSFVKSSGVSQIVFTFLLIPCCLT). Intrachain disulfides connect C60–C351 and C224–C238. N-linked (GlcNAc...) asparagine glycosylation is present at N82. The active-site Proton donor is the E148. N166, N235, N254, and N368 each carry an N-linked (GlcNAc...) asparagine glycan. 3 disulfides stabilise this stretch: C376-C387, C381-C435, and C437-C464. N393, N440, and N484 each carry an N-linked (GlcNAc...) asparagine glycan. S491 carries the GPI-anchor amidated serine lipid modification. Positions 492-510 (TTMFIVNILFLIISSVASL) are cleaved as a propeptide — removed in mature form.

The protein belongs to the glycosyl hydrolase 56 family. Testis.

The protein localises to the cell membrane. It catalyses the reaction Random hydrolysis of (1-&gt;4)-linkages between N-acetyl-beta-D-glucosamine and D-glucuronate residues in hyaluronate.. In terms of biological role, involved in sperm-egg adhesion. Upon fertilization sperm must first penetrate a layer of cumulus cells that surrounds the egg before reaching the zona pellucida. The cumulus cells are embedded in a matrix containing hyaluronic acid which is formed prior to ovulation. This protein aids in penetrating the layer of cumulus cells by digesting hyaluronic acid. This is Hyaluronidase PH-20 (SPAM1) from Macaca fascicularis (Crab-eating macaque).